Reading from the N-terminus, the 598-residue chain is mRNA-capping enzyme (598 aa).

The TPase stretch occupies residues 1-215 (MSQTGAPPRW…GSASAPASEP (215 aa)). Residues 25–183 (LPMKTMLGPR…FRRYGDVEDA (159 aa)) form the Tyrosine-protein phosphatase domain. Residue Cys126 is the Phosphocysteine intermediate of the active site. The segment at 186 to 227 (APPLPEWCFDEDEEEDGEEDGSASAPASEPSSSHTGQSKKKK) is disordered. A compositionally biased stretch (acidic residues) spans 193-206 (CFDEDEEEDGEEDG). Residues 207 to 218 (SASAPASEPSSS) show a composition bias toward low complexity. The tract at residues 233–598 (GAVFLEGVSV…PKRSANSIPQ (366 aa)) is GTase. Lys298 functions as the N6-GMP-lysine intermediate in the catalytic mechanism. Residues Arg303, Arg319, 347-349 (DGE), 462-464 (KWK), and 532-537 (RQRVDK) contribute to the GTP site. Residues 575–598 (RKNPADSDLMPPPPPKRSANSIPQ) form a disordered region.

It in the N-terminal section; belongs to the non-receptor class of the protein-tyrosine phosphatase family. The protein in the C-terminal section; belongs to the eukaryotic GTase family.

Its subcellular location is the nucleus. It carries out the reaction a 5'-end triphospho-ribonucleoside in mRNA + H2O = a 5'-end diphospho-ribonucleoside in mRNA + phosphate + H(+). The enzyme catalyses a 5'-end diphospho-ribonucleoside in mRNA + GTP + H(+) = a 5'-end (5'-triphosphoguanosine)-ribonucleoside in mRNA + diphosphate. Bifunctional mRNA-capping enzyme exhibiting RNA 5'-triphosphate monophosphatase activity in the N-terminal part and mRNA guanylyltransferase activity in the C-terminal part. Catalyzes the first two steps of cap formation: by removing the gamma-phosphate from the 5'-triphosphate end of nascent mRNA to yield a diphosphate end, and by transferring the GMP moiety of GTP to the 5'-diphosphate terminus of RNA via a covalent enzyme-GMP reaction intermediate. The chain is mRNA-capping enzyme (rngtt) from Danio rerio (Zebrafish).